The following is a 258-amino-acid chain: Snake venom serine protease KN13 (258 aa).

A signal peptide spans Met-1–Ala-18. A propeptide spanning residues Gln-19–Leu-24 is cleaved from the precursor. Positions Val-25–Ala-249 constitute a Peptidase S1 domain. Intrachain disulfides connect Cys-31–Cys-163, Cys-50–Cys-66, Cys-98–Cys-256, Cys-142–Cys-210, Cys-174–Cys-189, and Cys-200–Cys-225. His-65 (charge relay system) is an active-site residue. A glycan (N-linked (GlcNAc...) asparagine) is linked at Asn-103. Residue Asp-110 is the Charge relay system of the active site. Residues Asn-121, Asn-122, Asn-154, and Asn-170 are each glycosylated (N-linked (GlcNAc...) asparagine). The active-site Charge relay system is the Ser-204. Asn-251 is a glycosylation site (N-linked (GlcNAc...) asparagine).

Belongs to the peptidase S1 family. Snake venom subfamily. In terms of assembly, monomer. Expressed by the venom gland.

It is found in the secreted. Its function is as follows. Snake venom serine protease that may act in the hemostasis system of the prey. In Trimeresurus stejnegeri (Chinese green tree viper), this protein is Snake venom serine protease KN13.